Consider the following 441-residue polypeptide: Histidinol dehydrogenase (441 aa).

NAD(+) contacts are provided by Tyr-136, Gln-197, and Asn-220. Ser-243, Gln-265, and His-268 together coordinate substrate. Residues Gln-265 and His-268 each contribute to the Zn(2+) site. Active-site proton acceptor residues include Glu-333 and His-334. Residues His-334, Asp-367, Glu-421, and His-426 each contribute to the substrate site. Asp-367 lines the Zn(2+) pocket. A Zn(2+)-binding site is contributed by His-426.

The protein belongs to the histidinol dehydrogenase family. Zn(2+) is required as a cofactor.

It carries out the reaction L-histidinol + 2 NAD(+) + H2O = L-histidine + 2 NADH + 3 H(+). The protein operates within amino-acid biosynthesis; L-histidine biosynthesis; L-histidine from 5-phospho-alpha-D-ribose 1-diphosphate: step 9/9. Functionally, catalyzes the sequential NAD-dependent oxidations of L-histidinol to L-histidinaldehyde and then to L-histidine. This Pseudomonas putida (strain ATCC 47054 / DSM 6125 / CFBP 8728 / NCIMB 11950 / KT2440) protein is Histidinol dehydrogenase.